Here is a 281-residue protein sequence, read N- to C-terminus: Shikimate dehydrogenase (NADP(+)) (281 aa).

Residues 20–22 and T67 contribute to the shikimate site; that span reads SRS. K71 (proton acceptor) is an active-site residue. D83 serves as a coordination point for NADP(+). Positions 92 and 108 each coordinate shikimate. Residues 133-137, 157-162, and M225 each bind NADP(+); these read GAGGA and NRTEAR. Y227 lines the shikimate pocket. G248 serves as a coordination point for NADP(+).

It belongs to the shikimate dehydrogenase family. In terms of assembly, homodimer.

It catalyses the reaction shikimate + NADP(+) = 3-dehydroshikimate + NADPH + H(+). The protein operates within metabolic intermediate biosynthesis; chorismate biosynthesis; chorismate from D-erythrose 4-phosphate and phosphoenolpyruvate: step 4/7. In terms of biological role, involved in the biosynthesis of the chorismate, which leads to the biosynthesis of aromatic amino acids. Catalyzes the reversible NADPH linked reduction of 3-dehydroshikimate (DHSA) to yield shikimate (SA). In Paracidovorax citrulli (strain AAC00-1) (Acidovorax citrulli), this protein is Shikimate dehydrogenase (NADP(+)).